The primary structure comprises 62 residues: Toxin Ct28 (62 aa).

An N-terminal signal peptide occupies residues 1 to 22 (MKAFYGILIILLFCSMFKLNES). Disulfide bonds link Cys-29–Cys-51, Cys-35–Cys-56, and Cys-39–Cys-58. Residue Asn-61 is modified to Asparagine amide.

The protein belongs to the short scorpion toxin superfamily. Potassium channel inhibitor family. Alpha-KTx 02 subfamily. Expressed by the venom gland.

Its subcellular location is the secreted. In terms of biological role, blocks voltage-gated potassium channels. This is Toxin Ct28 from Centruroides tecomanus (Scorpion).